The primary structure comprises 379 residues: Glucose-1-phosphate adenylyltransferase (379 aa).

Alpha-D-glucose 1-phosphate contacts are provided by residues Y99, G164, 179-180 (EK), and S190.

This sequence belongs to the bacterial/plant glucose-1-phosphate adenylyltransferase family. As to quaternary structure, homotetramer.

It catalyses the reaction alpha-D-glucose 1-phosphate + ATP + H(+) = ADP-alpha-D-glucose + diphosphate. The protein operates within glycan biosynthesis; glycogen biosynthesis. Involved in the biosynthesis of ADP-glucose, a building block required for the elongation reactions to produce glycogen. Catalyzes the reaction between ATP and alpha-D-glucose 1-phosphate (G1P) to produce pyrophosphate and ADP-Glc. This Bacillus licheniformis (strain ATCC 14580 / DSM 13 / JCM 2505 / CCUG 7422 / NBRC 12200 / NCIMB 9375 / NCTC 10341 / NRRL NRS-1264 / Gibson 46) protein is Glucose-1-phosphate adenylyltransferase.